Here is a 108-residue protein sequence, read N- to C-terminus: Competence protein ComGC (108 aa).

A signal peptide spans Met1 to Val13. The segment at Lys14–Leu39 is may be involved in polymerization of ComGC. Phe16 carries the post-translational modification N-methylphenylalanine. A helical membrane pass occupies residues Phe16–Val36.

It belongs to the ComGC family. As to quaternary structure, the transformation pili are flexible filaments, consisting mainly of the major pilin ComGC and smaller amounts of the minor pilins, including at least ComGD, ComGF and ComGG, and perhaps ComGE. Homodimer. Forms higher-order multimers. Interacts with ComGG; the interaction is probably direct. Undergoes proteolytic cleavage.

It is found in the cell membrane. Its subcellular location is the cell surface. The protein resides in the fimbrium. It localises to the secreted. Its function is as follows. Major component of the type IV-like pilus (T4P) that plays a role in transformation. Transformation pili are dynamically extended and retracted, perhaps thereby promoting DNA uptake and transformation. Required for transformation. Required for DNA binding. This chain is Competence protein ComGC, found in Streptococcus pneumoniae serotype 4 (strain ATCC BAA-334 / TIGR4).